Consider the following 66-residue polypeptide: Large ribosomal subunit protein uL29 (66 aa).

This sequence belongs to the universal ribosomal protein uL29 family.

This is Large ribosomal subunit protein uL29 (rpmC) from Helicobacter pylori (strain J99 / ATCC 700824) (Campylobacter pylori J99).